We begin with the raw amino-acid sequence, 260 residues long: Fibronectin type III domain-containing protein 5 (260 aa).

The segment at 1 to 56 is disordered; sequence MQAARGGAGRPERPGRPGRGPERERERPPGAGAASPCAAPGLPAGGATIHPGSPSA. Positions 10–28 are enriched in basic and acidic residues; it reads RPERPGRPGRGPERERERP. The segment covering 29–56 has biased composition (low complexity); it reads PGAGAASPCAAPGLPAGGATIHPGSPSA. A Fibronectin type-III domain is found at 84 to 175; sequence APVNVTVRHL…EPVLFKTPRE (92 aa). 2 N-linked (GlcNAc...) asparagine glycosylation sites follow: asparagine 87 and asparagine 132. Residues 201–221 form a helical membrane-spanning segment; it reads GEVLIIVVVLFMWAGVIALFC. The span at 230–241 shows a compositional bias: basic and acidic residues; that stretch reads NEPNNNKEKTKS. Positions 230–260 are disordered; sequence NEPNNNKEKTKSASETSTPEHQGGGLLRSKI. Gly residues predominate over residues 251–260; that stretch reads QGGGLLRSKI. Residues 258–260 carry the Microbody targeting signal motif; that stretch reads SKI.

Dimer; may exist in other oligomeric forms. The extracellular domain is cleaved and released from the cell membrane. Post-translationally, N-Glycosylated. Widely expressed, with highest levels in heart. Very low expression, if any, in colon, pancreas and spleen.

The protein localises to the cell membrane. Its subcellular location is the peroxisome membrane. It localises to the secreted. Mediates beneficial effects of muscular exercise. Induces browning of white adipose tissue by stimulating UCP1 expression, at least in part, via the nuclear receptor PPARA. The protein is Fibronectin type III domain-containing protein 5 (FNDC5) of Homo sapiens (Human).